Here is an 890-residue protein sequence, read N- to C-terminus: MTQYTPMIQQYLKVKADYQDAFLFFRLGDFYEMFFEDAVKAAHELEITLTSRDGGSSERIPMCGVPYHAAKNYIEQLVEKGYKVAVCEQVEDPKTAKGVVRREVVQLITPGTMMEGRTIDEKENNFLAALTHFEDGSYALACNDLTTGQNTVTLLTGSVEDILLEVYATGSKEIVVDSSFSKDELNKLTETLKMTISYEDATAIPEGLEHLVKNVSQAKLIKAVGRLFNYVIRTQKRSLDHLQPVEIYYTNQFMKIDVHSKRNLELTETLRTKEKTGSLLWLLDKTKTAMGGRMLKQWMERPLIQKERIEERLEMVETFVNDYFLREDLKEKLKEVYDLERLAGKVAFGNVNARDLLQLRRSLLQVPAILEAISLLDNAYASRLIQGADPCESLTELLGRSIQENPPLSIKDGDIIKDGYNDKLDQYRYVSKNGKTWIAELEKRERDITGIKSLKIGYNRIFGYYIEVTKANLAALPEGRYERKQTLANAERFITDELKEKETLILEAEEKIVQLEYDLFTALREEVKVFIPKLQHLAKVISELDVLQSFATVSEEEQFVKPVLTTKREIFIKDGRHPVVEKVLNGKLYVPNDCIMPENMDVFLITGPNMSGKSTYMRQLALVTVMSQIGCFVPATEAVLPVFDQIFTRIGAADDLISGQSTFMVEMLEAKNAIANASERSLILFDEIGRGTSTYDGMALAQAIIEHIHDQIGAKTLFSTHYHELTVLEESLDQLKNVHVSAIEENGKVVFLHKIQDGAADKSYGIHVAQLAELPDSLIARAKEVLAQLEGQEEIIIPKRVEVKVQEAAPEPVVVKEEIAEIQETKVETEEESQLSFFGGEQSSKKQDKPLLDQKETAVLAQIKKIDLLDMTPLEAMNELYRLQKKLKKG.

607–614 serves as a coordination point for ATP; that stretch reads GPNMSGKS. Positions 832–851 are disordered; sequence ESQLSFFGGEQSSKKQDKPL.

This sequence belongs to the DNA mismatch repair MutS family.

Functionally, this protein is involved in the repair of mismatches in DNA. It is possible that it carries out the mismatch recognition step. This protein has a weak ATPase activity. This Bacillus cereus (strain B4264) protein is DNA mismatch repair protein MutS.